Reading from the N-terminus, the 316-residue chain is Transaldolase (316 aa).

Lysine 132 acts as the Schiff-base intermediate with substrate in catalysis.

This sequence belongs to the transaldolase family. Type 1 subfamily. In terms of assembly, homodimer.

The protein resides in the cytoplasm. It carries out the reaction D-sedoheptulose 7-phosphate + D-glyceraldehyde 3-phosphate = D-erythrose 4-phosphate + beta-D-fructose 6-phosphate. The protein operates within carbohydrate degradation; pentose phosphate pathway; D-glyceraldehyde 3-phosphate and beta-D-fructose 6-phosphate from D-ribose 5-phosphate and D-xylulose 5-phosphate (non-oxidative stage): step 2/3. In terms of biological role, transaldolase is important for the balance of metabolites in the pentose-phosphate pathway. This chain is Transaldolase, found in Vibrio campbellii (strain ATCC BAA-1116).